Reading from the N-terminus, the 211-residue chain is Protein-L-isoaspartate O-methyltransferase (211 aa).

The active site involves Ser62.

The protein belongs to the methyltransferase superfamily. L-isoaspartyl/D-aspartyl protein methyltransferase family.

It is found in the cytoplasm. The enzyme catalyses [protein]-L-isoaspartate + S-adenosyl-L-methionine = [protein]-L-isoaspartate alpha-methyl ester + S-adenosyl-L-homocysteine. Functionally, catalyzes the methyl esterification of L-isoaspartyl residues in peptides and proteins that result from spontaneous decomposition of normal L-aspartyl and L-asparaginyl residues. It plays a role in the repair and/or degradation of damaged proteins. This chain is Protein-L-isoaspartate O-methyltransferase, found in Shewanella baltica (strain OS195).